A 333-amino-acid polypeptide reads, in one-letter code: Dehydrodolichyl diphosphate synthase complex subunit Dhdds (333 aa).

Residues Asp-34, Gly-35, Arg-37, Arg-38, and Arg-85 each contribute to the (2E,6E)-farnesyl diphosphate site. Mg(2+) is bound at residue Asp-34. Residues Arg-38, Arg-85, Arg-205, Arg-211, and Ser-213 each coordinate isopentenyl diphosphate.

The protein belongs to the UPP synthase family. In terms of assembly, the active dehydrodolichyl diphosphate synthase complex is a heterotetramer composed of a dimer of heterodimer of DHDDS and NUS1. Interacts with NPC2. Requires Mg(2+) as cofactor.

It localises to the endoplasmic reticulum membrane. It catalyses the reaction n isopentenyl diphosphate + (2E,6E)-farnesyl diphosphate = a di-trans,poly-cis-polyprenyl diphosphate + n diphosphate. Its pathway is protein modification; protein glycosylation. It participates in lipid metabolism. Functionally, with NUS1, forms the dehydrodolichyl diphosphate synthase (DDS) complex, an essential component of the dolichol monophosphate (Dol-P) biosynthetic machinery. Both subunits contribute to enzymatic activity, i.e. condensation of multiple copies of isopentenyl pyrophosphate (IPP) to farnesyl pyrophosphate (FPP) to produce dehydrodolichyl diphosphate (Dedol-PP), a precursor of dolichol phosphate which is utilized as a sugar carrier in protein glycosylation in the endoplasmic reticulum (ER). Synthesizes long-chain polyprenols, mostly of C95 and C100 chain length. Regulates the glycosylation and stability of nascent NPC2, thereby promoting trafficking of LDL-derived cholesterol. The sequence is that of Dehydrodolichyl diphosphate synthase complex subunit Dhdds from Mus musculus (Mouse).